A 707-amino-acid polypeptide reads, in one-letter code: MAAEVYFGDLELFEPFDHPEESIPKPVHTRFKDDDGDEEDENGVGDAELRERLRQCEETIEQLRAENQELKRKLNILTRPSGILVNDTKLDGPILQILFMNNAISKQYHQEIEEFVSNLVKRFEEQQKNDVEKTSFNLLPQPSSIVLEEDHKVEESCAIKNNKEAFSVVGSVLYFTNFCLDKLGQPLLNENPQLSEGWEIPKYHQVFSHIVSLEGQEIQVKAKRPKPHCFNCGSEEHQMKDCPMPRNAARISEKRKEYMDACGEANNQNFQQRYHAEEVEERFGRFKPGVISEELQDALGVTDKSLPPFIYRMRQLGYPPGWLKEAELENSGLALYDGKDGTDGETEVGEIQQNKSVTYDLSKLVNYPGFNISTPRGIPDEWRIFGSIPMQACQQKDVFANYLTSNFQAPGVKSGNKRSSSHSSPGSPKKQKNESNSAGSPADMELDSDMEVPHGSQSSESFQFQPPLPPDTPPLPRGTPPPVFTPPLPKGTPPLTPSDSPQTRTASGAVDEDALTLEELEEQQRRIWAALEQAESVNSDSDVPVDTPLTGNSVASSPCPNELDLPVPEGKTSEKQTLDEPEVPEIFTKKSEAGHASSPDSEVTSLCQKEKAELAPVNTEGALLDNGSVVPNCDISNGGSQKLFPADTSPSTATKIHSPIPDMSKFATGITPFEFENMAESTGMYLRIRSLLKNSPRNQQKNKKASE.

Alanine 2 carries the post-translational modification N-acetylalanine. The disordered stretch occupies residues 16-44 (FDHPEESIPKPVHTRFKDDDGDEEDENGV). A compositionally biased stretch (acidic residues) spans 34–43 (DDGDEEDENG). Positions 45 to 80 (GDAELRERLRQCEETIEQLRAENQELKRKLNILTRP) form a coiled coil. The segment at 227–244 (PHCFNCGSEEHQMKDCPM) adopts a CCHC-type zinc-finger fold. RBM7 binding stretches follow at residues 286 to 299 (FKPG…QDAL) and 309 to 324 (FIYR…GWLK). Threonine 342 is modified (phosphothreonine). Disordered stretches follow at residues 409-518 (APGV…LTLE), 531-607 (LEQA…TSLC), and 641-660 (QKLF…HSPI). A Glycyl lysine isopeptide (Lys-Gly) (interchain with G-Cter in SUMO2) cross-link involves residue lysine 413. Residues 456-465 (SQSSESFQFQ) show a composition bias toward low complexity. A compositionally biased stretch (pro residues) spans 466–496 (PPLPPDTPPLPRGTPPPVFTPPLPKGTPPLT). Phosphothreonine is present on residues threonine 472, threonine 479, and threonine 485. Threonine 492 carries the phosphothreonine; by GSK3 modification. Positions 516-539 (TLEELEEQQRRIWAALEQAESVNS) form a coiled coil. The span at 549 to 559 (LTGNSVASSPC) shows a compositional bias: polar residues. A Phosphothreonine modification is found at threonine 577. Position 598 is a phosphoserine (serine 598). The segment covering 598-607 (SPDSEVTSLC) has biased composition (polar residues). The residue at position 648 (threonine 648) is a Phosphothreonine. Residues serine 649, serine 658, and serine 695 each carry the phosphoserine modification. The segment at 659-707 (PIPDMSKFATGITPFEFENMAESTGMYLRIRSLLKNSPRNQQKNKKASE) is MTREX binding.

This sequence belongs to the ZCCHC8 family. As to quaternary structure, component of a nuclear TRAMP-like complex, an ATP-dependent exosome regulatory complex consisting of a helicase (MTREX), an oligadenylate polymerase (TENT4B or TENT4A), and a substrate specific RNA-binding factor (ZCCHC7 or ZCCHC8). Several TRAMP-like complexes exist with specific compositions and are associated with nuclear, or nucleolar RNA exosomes. Identified in the spliceosome C complex. Component of the nuclear exosome targeting (NEXT) complex composed of MTREX, ZCCHC8, and RBM7 that directs a subset of non-coding short-lived RNAs for exosomal degradation. Interacts with proteins involved in RNA processing and degradation such as MTREX and RBM7; interaction with MTREX enhances MTREX RNA helicase activity and bridges between RBM7 and MTREX. Interacts with TERC, the telomerase RNA component. Post-translationally, phosphorylation at Thr-492 by GSK3 is triggered in cells entering mitosis; this phosphorylation is greatly enhanced by nocodazole treatment, but reduced by lithium.

It is found in the nucleus. Its subcellular location is the nucleoplasm. In terms of biological role, scaffolding subunit of the trimeric nuclear exosome targeting (NEXT) complex that is involved in the surveillance and turnover of aberrant transcripts and non-coding RNAs. NEXT functions as an RNA exosome cofactor that directs a subset of non-coding short-lived RNAs for exosomal degradation. May be involved in pre-mRNA splicing. It is required for 3'-end maturation of telomerase RNA component (TERC), TERC 3'-end targeting to the nuclear RNA exosome, and for telomerase function. In Homo sapiens (Human), this protein is Zinc finger CCHC domain-containing protein 8 (ZCCHC8).